The following is a 652-amino-acid chain: Probable endo-1,3(4)-beta-glucanase AFUB_029980 (652 aa).

The N-terminal stretch at 1–21 (MAPSSLLLSVGSLITSSLVSA) is a signal peptide. Residues 36–289 (ESWQGESFIN…WAGNVFAEST (254 aa)) enclose the GH16 domain. N-linked (GlcNAc...) asparagine glycosylation occurs at N64. E145 (nucleophile) is an active-site residue. Catalysis depends on E150, which acts as the Proton donor. Residues N200 and N208 are each glycosylated (N-linked (GlcNAc...) asparagine). The disordered stretch occupies residues 379-423 (NTVATSAADHATPSSAETTTVPAATGAPSVSATEGGDSELESTST). Residues 390–410 (TPSSAETTTVPAATGAPSVSA) are compositionally biased toward polar residues. Residue N453 is glycosylated (N-linked (GlcNAc...) asparagine). The disordered stretch occupies residues 509 to 551 (SEIPTAPPEPVSQAVSTGSFDDSDTAQGDSEEQGSIASASVAP). Residues 529 to 540 (DDSDTAQGDSEE) are compositionally biased toward acidic residues. N630 carries the GPI-anchor amidated asparagine lipid modification. Residues 631-652 (GANRMSVGLSGLIGVMFIAALA) constitute a propeptide, removed in mature form.

It belongs to the glycosyl hydrolase 16 family.

Its subcellular location is the cell membrane. The enzyme catalyses Endohydrolysis of (1-&gt;3)- or (1-&gt;4)-linkages in beta-D-glucans when the glucose residue whose reducing group is involved in the linkage to be hydrolyzed is itself substituted at C-3.. Functionally, mixed-linked glucanase involved in the degradation of complex natural cellulosic substrates. The protein is Probable endo-1,3(4)-beta-glucanase AFUB_029980 of Aspergillus fumigatus (strain CBS 144.89 / FGSC A1163 / CEA10) (Neosartorya fumigata).